Here is a 99-residue protein sequence, read N- to C-terminus: uncharacterized protein (99 aa).

The chain crosses the membrane as a helical span at residues 6 to 26; the sequence is LVCSIVFILFILFYDLKIGTI. In terms of domain architecture, LysM spans 48-95; sequence KTVKVKPGDTVMSIVGSAGSPDDIVKDFEALNPNVKANAIQAGTAYKF.

It is found in the secreted. It localises to the cell wall. Its subcellular location is the membrane. This is an uncharacterized protein from Bacillus subtilis (strain 168).